A 1073-amino-acid chain; its full sequence is Envelopment polyprotein (1073 aa).

Residues 1–19 (MMKVIWFSSLICFVIQCSG) form the signal peptide. Residues 20–453 (DSGPIICAGP…NPQCYPAKKW (434 aa)) lie on the Lumenal side of the membrane. A disulfide bridge connects residues cysteine 26 and cysteine 49. Asparagine 33 and asparagine 63 each carry an N-linked (GlcNAc...) asparagine; by host glycan. Intrachain disulfides connect cysteine 143–cysteine 156, cysteine 180–cysteine 327, cysteine 206–cysteine 216, cysteine 258–cysteine 305, cysteine 266–cysteine 303, cysteine 274–cysteine 280, cysteine 287–cysteine 292, cysteine 349–cysteine 352, cysteine 356–cysteine 424, and cysteine 376–cysteine 381. The helical transmembrane segment at 454 to 474 (LFIIIVILLGYAGLMLLTNVL) threads the bilayer. The golgi retention signal stretch occupies residues 475–521 (KAIGIWGSWVIAPVKLMFAIIKKLMRTVSCLMRKLMDRGRQVIHEEI). The Cytoplasmic portion of the chain corresponds to 475–535 (KAIGIWGSWV…EGNQDDVRIE (61 aa)). The tract at residues 536-562 (MARPRRVRHWMYSPVILTILAIGLAES) is internal signal sequence for glycoprotein C. Cystine bridges form between cysteine 563/cysteine 604, cysteine 576/cysteine 586, cysteine 629/cysteine 725, cysteine 644/cysteine 841, cysteine 650/cysteine 698, cysteine 656/cysteine 705, cysteine 660/cysteine 687, cysteine 691/cysteine 696, cysteine 778/cysteine 793, and cysteine 809/cysteine 823. Topologically, residues 563-1036 (CDEMVHADSK…ALFGNGLSRW (474 aa)) are lumenal. The segment at 650–656 (CRWAGDC) is fusion loop. The tract at residues 691-705 (CGGAACGCFNAAPSC) is fusion loop. Residues asparagine 853 and asparagine 914 are each glycosylated (N-linked (GlcNAc...) asparagine; by host). 3 cysteine pairs are disulfide-bonded: cysteine 908-cysteine 978, cysteine 918-cysteine 921, and cysteine 943-cysteine 974. Residue asparagine 936 is glycosylated (N-linked (GlcNAc...) asparagine; by host). The helical transmembrane segment at 1037-1057 (ILGVIGVLLGGLALFFMIMSL) threads the bilayer. The Cytoplasmic segment spans residues 1058–1073 (FKLGTKQVFRSRTKLA).

It belongs to the phlebovirus envelope glycoprotein family. Homodimer. Heterodimer with glycoprotein C. Homotrimer (postfusion). In terms of assembly, heterodimer with glycoprotein N. Post-translationally, specific enzymatic cleavages in vivo yield mature proteins including glycoprotein C and glycoprotein N. In terms of processing, the cytoplasmic tail is Palmitoylated. Glycosylated. Post-translationally, palmitoylated.

The protein localises to the virion membrane. Its subcellular location is the host Golgi apparatus membrane. It is found in the host endoplasmic reticulum membrane. Structural component of the virion that interacts with glycoprotein C. It shields the hydrophobic fusion loops of the glycoprotein C, preventing premature fusion. The glycoprotein protrusions are arranged on an icosahedral lattice, with T=12 triangulation. They are able to attach the virion to the host cell receptor CD209/DC-SIGN and to promote fusion of membranes with the late endosome after clathrin-mediated endocytosis of the virion. Plays a role in the packaging of ribonucleoproteins during virus assembly. Its function is as follows. Structural component of the virion that interacts with glycoprotein N. Acts as a class II fusion protein that is activated upon acidification and subsequent repositioning of the glycoprotein N. The glycoprotein protrusions are arranged on an icosahedral lattice, with T=12 triangulation. They are able to attach the virion to the host cell receptor CD209/DC-SIGN and to promote fusion of membranes with the late endosome after clathrin-mediated endocytosis of the virion. The protein is Envelopment polyprotein of Dabie bandavirus (Severe fever with thrombocytopenia virus).